A 340-amino-acid polypeptide reads, in one-letter code: Nucleoid-associated protein PSPA7_4451 (340 aa).

The protein belongs to the YejK family.

The protein localises to the cytoplasm. Its subcellular location is the nucleoid. The sequence is that of Nucleoid-associated protein PSPA7_4451 from Pseudomonas paraeruginosa (strain DSM 24068 / PA7) (Pseudomonas aeruginosa (strain PA7)).